The primary structure comprises 103 residues: Large ribosomal subunit protein uL24 (103 aa).

It belongs to the universal ribosomal protein uL24 family. As to quaternary structure, part of the 50S ribosomal subunit.

One of two assembly initiator proteins, it binds directly to the 5'-end of the 23S rRNA, where it nucleates assembly of the 50S subunit. Functionally, one of the proteins that surrounds the polypeptide exit tunnel on the outside of the subunit. The protein is Large ribosomal subunit protein uL24 of Oceanobacillus iheyensis (strain DSM 14371 / CIP 107618 / JCM 11309 / KCTC 3954 / HTE831).